Here is a 236-residue protein sequence, read N- to C-terminus: DNA repair protein RecO (236 aa).

Belongs to the RecO family.

In terms of biological role, involved in DNA repair and RecF pathway recombination. This chain is DNA repair protein RecO, found in Haemophilus influenzae (strain 86-028NP).